Here is a 392-residue protein sequence, read N- to C-terminus: Selenide, water dikinase 1 (392 aa).

Ser-2 carries the post-translational modification N-acetylserine. The active site involves Cys-31. Residues Lys-32, 67–69, Asp-87, Asp-110, and 161–164 contribute to the ATP site; these read GMD and GGQT. Asp-69 serves as a coordination point for Mg(2+). Mg(2+) is bound at residue Asp-110. Residue Asp-265 coordinates Mg(2+).

The protein belongs to the selenophosphate synthase 1 family. Class II subfamily. As to quaternary structure, homodimer. Mg(2+) serves as cofactor.

Its subcellular location is the cell membrane. It localises to the nucleus membrane. The enzyme catalyses hydrogenselenide + ATP + H2O = selenophosphate + AMP + phosphate + 2 H(+). In terms of biological role, synthesizes selenophosphate from selenide and ATP. The sequence is that of Selenide, water dikinase 1 (Sephs1) from Mus musculus (Mouse).